Reading from the N-terminus, the 83-residue chain is Small ribosomal subunit protein bS16 (83 aa).

The protein belongs to the bacterial ribosomal protein bS16 family.

This is Small ribosomal subunit protein bS16 from Pseudomonas putida (strain W619).